Consider the following 103-residue polypeptide: ATP synthase F(0) complex subunit g, mitochondrial (103 aa).

N-acetylalanine is present on Ala-2. An N6-acetyllysine mark is found at Lys-11, Lys-24, Lys-35, and Lys-54.

Component of the ATP synthase complex composed at least of ATP5F1A/subunit alpha, ATP5F1B/subunit beta, ATP5MC1/subunit c (homooctomer), MT-ATP6/subunit a, MT-ATP8/subunit 8, ATP5ME/subunit e, ATP5MF/subunit f, ATP5MG/subunit g, ATP5MK/subunit k, ATP5MJ/subunit j, ATP5F1C/subunit gamma, ATP5F1D/subunit delta, ATP5F1E/subunit epsilon, ATP5PF/subunit F6, ATP5PB/subunit b, ATP5PD/subunit d, ATP5PO/subunit OSCP. ATP synthase complex consists of a soluble F(1) head domain (subunits alpha(3) and beta(3)) - the catalytic core - and a membrane F(0) domain - the membrane proton channel (subunits c, a, 8, e, f, g, k and j). These two domains are linked by a central stalk (subunits gamma, delta, and epsilon) rotating inside the F1 region and a stationary peripheral stalk (subunits F6, b, d, and OSCP).

The protein localises to the mitochondrion. It localises to the mitochondrion inner membrane. Functionally, subunit g, of the mitochondrial membrane ATP synthase complex (F(1)F(0) ATP synthase or Complex V) that produces ATP from ADP in the presence of a proton gradient across the membrane which is generated by electron transport complexes of the respiratory chain. ATP synthase complex consist of a soluble F(1) head domain - the catalytic core - and a membrane F(1) domain - the membrane proton channel. These two domains are linked by a central stalk rotating inside the F(1) region and a stationary peripheral stalk. During catalysis, ATP synthesis in the catalytic domain of F(1) is coupled via a rotary mechanism of the central stalk subunits to proton translocation. In vivo, can only synthesize ATP although its ATP hydrolase activity can be activated artificially in vitro. Part of the complex F(0) domain. The polypeptide is ATP synthase F(0) complex subunit g, mitochondrial (Bos taurus (Bovine)).